The sequence spans 395 residues: Capsid protein (395 aa).

The segment covering 1–41 (MARKYAKRSKSRPRTARRSPKSRSRPRSRAPRRKAPSRPRI) has biased composition (basic residues). Residues 1–51 (MARKYAKRSKSRPRTARRSPKSRSRPRSRAPRRKAPSRPRIQRVNPVRRPM) are disordered. The Nuclear localization signal motif lies at 2–9 (ARKYAKRS).

The protein resides in the host nucleus. It localises to the virion. Functionally, self-assembles to form the virion icosahedral capsid. This Chaetoceros setoense (Chaetoceros setoense DNA virus) protein is Capsid protein.